The chain runs to 372 residues: Lipoyl synthase, mitochondrial (372 aa).

[4Fe-4S] cluster is bound by residues Cys103, Cys108, Cys114, Cys134, Cys138, Cys141, and Ser349. One can recognise a Radical SAM core domain in the interval 119–338; the sequence is EHGTQTATIM…EERGNQLGFL (220 aa).

This sequence belongs to the radical SAM superfamily. Lipoyl synthase family. [4Fe-4S] cluster is required as a cofactor.

The protein resides in the mitochondrion. The enzyme catalyses [[Fe-S] cluster scaffold protein carrying a second [4Fe-4S](2+) cluster] + N(6)-octanoyl-L-lysyl-[protein] + 2 oxidized [2Fe-2S]-[ferredoxin] + 2 S-adenosyl-L-methionine + 4 H(+) = [[Fe-S] cluster scaffold protein] + N(6)-[(R)-dihydrolipoyl]-L-lysyl-[protein] + 4 Fe(3+) + 2 hydrogen sulfide + 2 5'-deoxyadenosine + 2 L-methionine + 2 reduced [2Fe-2S]-[ferredoxin]. Its pathway is protein modification; protein lipoylation via endogenous pathway; protein N(6)-(lipoyl)lysine from octanoyl-[acyl-carrier-protein]: step 2/2. Functionally, catalyzes the radical-mediated insertion of two sulfur atoms into the C-6 and C-8 positions of the octanoyl moiety bound to the lipoyl domains of lipoate-dependent enzymes, thereby converting the octanoylated domains into lipoylated derivatives. The protein is Lipoyl synthase, mitochondrial of Drosophila willistoni (Fruit fly).